A 268-amino-acid polypeptide reads, in one-letter code: Tryptophan synthase alpha chain (268 aa).

Catalysis depends on proton acceptor residues Glu49 and Asp60.

It belongs to the TrpA family. As to quaternary structure, tetramer of two alpha and two beta chains.

It carries out the reaction (1S,2R)-1-C-(indol-3-yl)glycerol 3-phosphate + L-serine = D-glyceraldehyde 3-phosphate + L-tryptophan + H2O. The protein operates within amino-acid biosynthesis; L-tryptophan biosynthesis; L-tryptophan from chorismate: step 5/5. Functionally, the alpha subunit is responsible for the aldol cleavage of indoleglycerol phosphate to indole and glyceraldehyde 3-phosphate. This Escherichia coli (strain 55989 / EAEC) protein is Tryptophan synthase alpha chain.